We begin with the raw amino-acid sequence, 435 residues long: Nuclear receptor subfamily 6 group A member 1 (435 aa).

The segment at residues 11-86 is a DNA-binding region (nuclear receptor); sequence QRACLICGDR…MGMNRKAIRE (76 aa). NR C4-type zinc fingers lie at residues 14–34 and 50–69; these read CLICGDRATGLHYGIISCEGC and CSRDKNCVMSRKQRNRCQYC. A disordered region spans residues 84-158; it reads IREDGMPGGR…STPSSSRSME (75 aa). A compositionally biased stretch (polar residues) spans 121–141; that stretch reads NTSWSNNGDSDHSSPGNAVSE. Low complexity predominate over residues 142-156; that stretch reads SNQPSPVSTPSSSRS. The NR LBD domain maps to 204-435; the sequence is QSHTLINQLL…HSCKTIVTKE (232 aa).

It belongs to the nuclear hormone receptor family. NR6 subfamily. In terms of assembly, homodimer. As to expression, transiently expressed in differentiating cells of all embryonic germ layers. Expressed in an anterior to posterior concentration gradient from late gastrula to midneurula stages. Shows a complicated spatio-temporal pattern of expression during neurulation, being predominant in the neural plate and neural crest in midneurula embryos. At late tailbud (stage 30), mainly expressed in the head mesenchyme, gill arches and tail tip. Expression persists in the epidermis, somites and endoderm, and in the central nervous system, expression is restricted to the midbrain, hindbrain and part of the spinal cord. Isoforms Oo and Em are both expressed in the brain and isoform Oo is expressed in the germ cells of both the adult testis and ovary.

Its subcellular location is the cytoplasm. It is found in the nucleus. Probable orphan nuclear receptor. Binds to a response element containing repeats of the motif 5'-AGGTCA-3'. Required for anterior-posterior patterning during organogenesis. Acts with chordin to play a role in patterning the midbrain-hindbrain. Isoform Em is required for integrin-mediated cell matrix interaction during neurulation and for the morphogenetic movements leading to formation of the neural tube. Also mediates the effect of retinoic acid on primary neurogenesis. The sequence is that of Nuclear receptor subfamily 6 group A member 1 from Xenopus laevis (African clawed frog).